The primary structure comprises 304 residues: Protoheme IX farnesyltransferase (304 aa).

Helical transmembrane passes span 31-51 (VNTLIVFCAVIGMFLAVPDGL), 58-78 (VAATLGIAFVAGAAAAMNCLI), 99-119 (LAPAETLLFAGVLGGTGLTVL), 126-146 (LTMWLTLATFVGYAVVYTVLL), 154-174 (IVIGGASGAMPPVLGWAAVTG), 180-200 (ALLLFLIIFAWTPPHFWALAL), 222-242 (FTRLSVLLYTCILFGVTLLPF), 243-263 (ATRMSGPLYLVCAVALGIGFL), and 284-304 (FSILYLFLLFAALLMDHYLPL).

The protein belongs to the UbiA prenyltransferase family. Protoheme IX farnesyltransferase subfamily.

It localises to the cell inner membrane. It carries out the reaction heme b + (2E,6E)-farnesyl diphosphate + H2O = Fe(II)-heme o + diphosphate. It functions in the pathway porphyrin-containing compound metabolism; heme O biosynthesis; heme O from protoheme: step 1/1. Converts heme B (protoheme IX) to heme O by substitution of the vinyl group on carbon 2 of heme B porphyrin ring with a hydroxyethyl farnesyl side group. The chain is Protoheme IX farnesyltransferase from Aromatoleum aromaticum (strain DSM 19018 / LMG 30748 / EbN1) (Azoarcus sp. (strain EbN1)).